A 428-amino-acid polypeptide reads, in one-letter code: 3-phosphoshikimate 1-carboxyvinyltransferase (428 aa).

Positions 23, 24, and 28 each coordinate 3-phosphoshikimate. K23 is a phosphoenolpyruvate binding site. Phosphoenolpyruvate-binding residues include G97 and R125. 3-phosphoshikimate-binding residues include S170, S171, Q172, S198, D314, N337, and K341. Position 172 (Q172) interacts with phosphoenolpyruvate. The Proton acceptor role is filled by D314. Phosphoenolpyruvate contacts are provided by R345, R387, and K412.

The protein belongs to the EPSP synthase family. As to quaternary structure, monomer.

The protein localises to the cytoplasm. The enzyme catalyses 3-phosphoshikimate + phosphoenolpyruvate = 5-O-(1-carboxyvinyl)-3-phosphoshikimate + phosphate. It functions in the pathway metabolic intermediate biosynthesis; chorismate biosynthesis; chorismate from D-erythrose 4-phosphate and phosphoenolpyruvate: step 6/7. In terms of biological role, catalyzes the transfer of the enolpyruvyl moiety of phosphoenolpyruvate (PEP) to the 5-hydroxyl of shikimate-3-phosphate (S3P) to produce enolpyruvyl shikimate-3-phosphate and inorganic phosphate. This is 3-phosphoshikimate 1-carboxyvinyltransferase from Serratia proteamaculans (strain 568).